The chain runs to 407 residues: Pleckstrin homology-like domain family A member 1 (407 aa).

2 stretches are compositionally biased toward basic and acidic residues: residues 1–11 (MRRTPAAERLS) and 54–63 (RSAEDGREQP). A disordered region spans residues 1-67 (MRRTPAAERL…DGREQPAHGS (67 aa)). In terms of domain architecture, PH spans 149-184 (SGCKALKEGVLEKRSDGLLQLWKKKCCILTEEGLLL). Disordered stretches follow at residues 188–224 (KQVQHQQQQQQQQQPGQGTAEPSQPSGPAVTSLEPPA) and 296–407 (QQHL…SNSA). Composition is skewed to low complexity over residues 189–204 (QVQHQQQQQQQQQPGQ) and 297–319 (QHLVQQQPPQTQQIQPQPQQPQI). The tract at residues 312–348 (PQPQQPQIQPQPQPQIQPQPQPQPQPQPQPQQQPQPQ) is 15 X 2 AA repeats of P-Q. Positions 320 to 344 (QPQPQPQIQPQPQPQPQPQPQPQQQ) are enriched in pro residues. An 11 X 2 AA repeats of P-H region spans residues 354–381 (PHPHPHLYPHPHPHAHSHPHPHPHPHPH). Residues 354 to 384 (PHPHPHLYPHPHPHAHSHPHPHPHPHPHQLQ) show a composition bias toward basic residues. The span at 385-395 (HAHQPLHSQPQ) shows a compositional bias: low complexity.

As to quaternary structure, interacts with RPL14, EIF3S7 and PABPC4.

It localises to the cytoplasm. Its subcellular location is the cytoplasmic vesicle. The protein localises to the nucleus. It is found in the nucleolus. Functionally, seems to be involved in regulation of apoptosis. May be involved in detachment-mediated programmed cell death. May mediate apoptosis during neuronal development. May be involved in regulation of anti-apoptotic effects of IGF1. May be involved in translational regulation. The polypeptide is Pleckstrin homology-like domain family A member 1 (Phlda1) (Rattus norvegicus (Rat)).